We begin with the raw amino-acid sequence, 572 residues long: Proline--tRNA ligase (572 aa).

The protein belongs to the class-II aminoacyl-tRNA synthetase family. ProS type 1 subfamily. In terms of assembly, homodimer.

It is found in the cytoplasm. It carries out the reaction tRNA(Pro) + L-proline + ATP = L-prolyl-tRNA(Pro) + AMP + diphosphate. Catalyzes the attachment of proline to tRNA(Pro) in a two-step reaction: proline is first activated by ATP to form Pro-AMP and then transferred to the acceptor end of tRNA(Pro). As ProRS can inadvertently accommodate and process non-cognate amino acids such as alanine and cysteine, to avoid such errors it has two additional distinct editing activities against alanine. One activity is designated as 'pretransfer' editing and involves the tRNA(Pro)-independent hydrolysis of activated Ala-AMP. The other activity is designated 'posttransfer' editing and involves deacylation of mischarged Ala-tRNA(Pro). The misacylated Cys-tRNA(Pro) is not edited by ProRS. The chain is Proline--tRNA ligase from Escherichia coli O9:H4 (strain HS).